Consider the following 430-residue polypeptide: Serine--tRNA ligase (430 aa).

Residue 237 to 239 (TAE) coordinates L-serine. 268–270 (RAE) contributes to the ATP binding site. Residue E291 coordinates L-serine. 355-358 (EVSS) contacts ATP. An L-serine-binding site is contributed by S391.

It belongs to the class-II aminoacyl-tRNA synthetase family. Type-1 seryl-tRNA synthetase subfamily. In terms of assembly, homodimer. The tRNA molecule binds across the dimer.

The protein resides in the cytoplasm. The catalysed reaction is tRNA(Ser) + L-serine + ATP = L-seryl-tRNA(Ser) + AMP + diphosphate + H(+). It carries out the reaction tRNA(Sec) + L-serine + ATP = L-seryl-tRNA(Sec) + AMP + diphosphate + H(+). It functions in the pathway aminoacyl-tRNA biosynthesis; selenocysteinyl-tRNA(Sec) biosynthesis; L-seryl-tRNA(Sec) from L-serine and tRNA(Sec): step 1/1. Its function is as follows. Catalyzes the attachment of serine to tRNA(Ser). Is also able to aminoacylate tRNA(Sec) with serine, to form the misacylated tRNA L-seryl-tRNA(Sec), which will be further converted into selenocysteinyl-tRNA(Sec). This is Serine--tRNA ligase from Baumannia cicadellinicola subsp. Homalodisca coagulata.